We begin with the raw amino-acid sequence, 365 residues long: NAD(P)H-quinone oxidoreductase subunit 1, chloroplastic (365 aa).

6 helical membrane-spanning segments follow: residues L32–L52, Y98–I118, L129–M149, L257–G279, V302–I322, and L338–T358.

This sequence belongs to the complex I subunit 1 family. In terms of assembly, NDH is composed of at least 16 different subunits, 5 of which are encoded in the nucleus.

It localises to the plastid. Its subcellular location is the chloroplast thylakoid membrane. It catalyses the reaction a plastoquinone + NADH + (n+1) H(+)(in) = a plastoquinol + NAD(+) + n H(+)(out). The catalysed reaction is a plastoquinone + NADPH + (n+1) H(+)(in) = a plastoquinol + NADP(+) + n H(+)(out). NDH shuttles electrons from NAD(P)H:plastoquinone, via FMN and iron-sulfur (Fe-S) centers, to quinones in the photosynthetic chain and possibly in a chloroplast respiratory chain. The immediate electron acceptor for the enzyme in this species is believed to be plastoquinone. Couples the redox reaction to proton translocation, and thus conserves the redox energy in a proton gradient. In Spinacia oleracea (Spinach), this protein is NAD(P)H-quinone oxidoreductase subunit 1, chloroplastic.